The primary structure comprises 1233 residues: Insulin receptor substrate 1 (1233 aa).

Ser3 is subject to Phosphoserine. The interval Ser3–Ser133 is mediates interaction with PHIP. Positions Asp12 to Asn115 constitute a PH domain. Position 99 is a phosphoserine; by CK2 (Ser99). One can recognise an IRS-type PTB domain in the interval Phe155–Phe259. A disordered region spans residues Asp257 to Glu425. The segment covering Lys264–Ser276 has biased composition (low complexity). Phosphoserine; by RPS6KB1 occurs at positions 265 and 302. Ser307 is subject to Phosphoserine; by IKKB, MAPK8 and RPS6KB1. Phosphoserine occurs at positions 318, 325, 340, and 343. Basic residues predominate over residues Thr349–Ser358. Low complexity-rich tracts occupy residues Ser378 to Ser399 and Ser407 to Gly419. Position 414 is a phosphoserine (Ser414). A phosphothreonine mark is found at Thr441 and Thr448. Position 460 is a phosphotyrosine; by INSR (Tyr460). The YXXM motif 1 signature appears at Tyr460–Met463. Phosphoserine; by RPS6KB1 is present on Ser522. Short sequence motifs (YXXM motif) lie at residues Tyr546–Met549 and Tyr608–Met611. The residue at position 608 (Tyr608) is a Phosphotyrosine; by INSR. Position 612 is a phosphoserine (Ser612). The residue at position 628 (Tyr628) is a Phosphotyrosine; by INSR. A YXXM motif 4 motif is present at residues Tyr628 to Met631. Residue Ser632 is modified to Phosphoserine; by RPS6KB1 and ROCK2. A disordered region spans residues Gln651 to Leu720. Position 658 is a phosphotyrosine (Tyr658). The short motif at Tyr658–Met661 is the YXXM motif 5 element. The span at Ser662–Ser689 shows a compositional bias: low complexity. A YXXM motif 6 motif is present at residues Tyr727–Met730. Residues Phe766–Thr985 are disordered. Basic and acidic residues predominate over residues Arg771–Arg780. Composition is skewed to low complexity over residues Arg785–Arg794 and Asp801–Ser810. Residue Ser789 is modified to Phosphoserine; by AMPK and SIK2. Phosphoserine is present on Ser887. 3 positions are modified to phosphotyrosine; by INSR: Tyr891, Tyr935, and Tyr983. The segment at Tyr891–Asn893 is GRB2-binding. 3 short sequence motifs (YXXM motif) span residues Tyr935–Met938, Tyr983–Met986, and Tyr1006–Met1009. The disordered stretch occupies residues Ala1015–Ser1137. Low complexity predominate over residues Ser1032–Pro1042. Composition is skewed to polar residues over residues Gln1043–His1052 and Thr1069–Ala1081. Ser1096 and Ser1097 each carry phosphoserine. A compositionally biased stretch (gly residues) spans Ala1116 to Ser1129. The residue at position 1173 (Tyr1173) is a Phosphotyrosine; by INSR. Residues Leu1178–Gln1233 are disordered. Lys1180 is covalently cross-linked (Glycyl lysine isopeptide (Lys-Gly) (interchain with G-Cter in ubiquitin)). The segment covering Gly1203 to Lys1227 has biased composition (polar residues). Tyr1220 bears the Phosphotyrosine; by INSR mark.

In terms of assembly, interacts (via phosphorylated YXXM motifs) with PIK3R1. Interacts with ROCK1. Interacts with GRB2. Interacts with SOCS7. Interacts (via IRS-type PTB domain) with IGF1R and INSR (via the tyrosine-phosphorylated NPXY motif). Interacts with UBTF and PIK3CA. Interacts (via PH domain) with PHIP. Interacts with FER. Interacts with ALK. Interacts with EIF2AK2/PKR. Interacts with GKAP1. Interacts with DGKZ in the absence of insulin; insulin stimulation decreases this interaction. Found in a ternary complex with DGKZ and PIP5K1A in the absence of insulin stimulation. Interacts with SQSTM1; the interaction is disrupted by the presence of tensin TNS2. Interacts with NCK1 (via SH2 domain). Interacts with NCK2 (via SH3 domain). Interacts with SH2B1; this interaction enhances leptin-induced activation of the PI3-kinase pathway. Interacts with DVL2; this interaction promotes the Wnt/beta-catenin signaling pathway. Post-translationally, serine phosphorylation of IRS1 is a mechanism for insulin resistance. Ser-307 phosphorylation inhibits insulin action through disruption of IRS1 interaction with the insulin receptor. Phosphorylation of Tyr-891 is required for GRB2-binding. Phosphorylated by ALK. Phosphorylated at Ser-265, Ser-302, Ser-632 and Ser-1097 by RPS6KB1; phosphorylation induces accelerated degradation of IRS1. Phosphorylated on tyrosine residues in response to insulin. In skeletal muscles, dephosphorylated on Tyr-608 by TNS2 under anabolic conditions; dephosphorylation results in the proteasomal degradation of IRS1. In terms of processing, ubiquitinated by the Cul7-RING(FBXW8) complex in a mTOR-dependent manner, leading to its degradation: the Cul7-RING(FBXW8) complex recognizes and binds IRS1 previously phosphorylated by S6 kinase (RPS6KB1 or RPS6KB2). Ubiquitinated by TRAF4 through 'Lys-29' linkage; this ubiquitination regulates the interaction of IRS1 with IGFR and IRS1 tyrosine phosphorylation upon IGF1 stimulation. S-nitrosylation at by BLVRB inhibits its activity. Expressed in osteoblasts, but not in osteoclasts.

The protein resides in the cytoplasm. It is found in the nucleus. Signaling adapter protein that participates in the signal transduction from two prominent receptor tyrosine kinases, insulin receptor/INSR and insulin-like growth factor I receptor/IGF1R. Plays therefore an important role in development, growth, glucose homeostasis as well as lipid metabolism. Upon phosphorylation by the insulin receptor, functions as a signaling scaffold that propagates insulin action through binding to SH2 domain-containing proteins including the p85 regulatory subunit of PI3K, NCK1, NCK2, GRB2 or SHP2. Recruitment of GRB2 leads to the activation of the guanine nucleotide exchange factor SOS1 which in turn triggers the Ras/Raf/MEK/MAPK signaling cascade. Activation of the PI3K/AKT pathway is responsible for most of insulin metabolic effects in the cell, and the Ras/Raf/MEK/MAPK is involved in the regulation of gene expression and in cooperation with the PI3K pathway regulates cell growth and differentiation. Acts a positive regulator of the Wnt/beta-catenin signaling pathway through suppression of DVL2 autophagy-mediated degradation leading to cell proliferation. This is Insulin receptor substrate 1 (Irs1) from Mus musculus (Mouse).